A 486-amino-acid chain; its full sequence is Lipase 1 (486 aa).

Cys58 and Cys82 are joined by a disulfide. Ser193 functions as the Acyl-ester intermediate in the catalytic mechanism. Asp303 functions as the Charge relay system in the catalytic mechanism. Residue Asn332 is glycosylated (N-linked (GlcNAc...) asparagine). His392 functions as the Charge relay system in the catalytic mechanism.

It belongs to the type-B carboxylesterase/lipase family.

The catalysed reaction is a triacylglycerol + H2O = a diacylglycerol + a fatty acid + H(+). This is Lipase 1 (LIP1) from Yarrowia lipolytica (strain CLIB 122 / E 150) (Yeast).